The chain runs to 131 residues: uncharacterized protein (131 aa).

An HTH hxlR-type domain is found at 26–124; sequence CSVEVAVNEI…WGKMYGSHQE (99 aa).

This is an uncharacterized protein from Methanothermobacter thermautotrophicus (strain ATCC 29096 / DSM 1053 / JCM 10044 / NBRC 100330 / Delta H) (Methanobacterium thermoautotrophicum).